A 159-amino-acid polypeptide reads, in one-letter code: MSQLTHINSTGEAHMVDVSAKAETSREARAEAFVGMKPETLAMIIEGRHHKGDVFATARIAGIQAAKRTWELIPLCHPLLLTKVEVQLEAQTKYNRVRIESCCRLTGKTGVEMEALTAASVAALTIYDMCKAVQKDMVIGPVRLLEKIGGKLGHFKVEQ.

Substrate contacts are provided by residues 75-77 (LCH) and 113-114 (ME). D128 is an active-site residue.

Belongs to the MoaC family. Homohexamer; trimer of dimers.

It carries out the reaction (8S)-3',8-cyclo-7,8-dihydroguanosine 5'-triphosphate = cyclic pyranopterin phosphate + diphosphate. It participates in cofactor biosynthesis; molybdopterin biosynthesis. Catalyzes the conversion of (8S)-3',8-cyclo-7,8-dihydroguanosine 5'-triphosphate to cyclic pyranopterin monophosphate (cPMP). This Photorhabdus laumondii subsp. laumondii (strain DSM 15139 / CIP 105565 / TT01) (Photorhabdus luminescens subsp. laumondii) protein is Cyclic pyranopterin monophosphate synthase.